A 501-amino-acid chain; its full sequence is Probable cytosol aminopeptidase (501 aa).

The Mn(2+) site is built by lysine 267 and aspartate 272. Lysine 279 is a catalytic residue. Aspartate 290, aspartate 349, and glutamate 351 together coordinate Mn(2+). Arginine 353 is a catalytic residue.

It belongs to the peptidase M17 family. It depends on Mn(2+) as a cofactor.

Its subcellular location is the cytoplasm. It catalyses the reaction Release of an N-terminal amino acid, Xaa-|-Yaa-, in which Xaa is preferably Leu, but may be other amino acids including Pro although not Arg or Lys, and Yaa may be Pro. Amino acid amides and methyl esters are also readily hydrolyzed, but rates on arylamides are exceedingly low.. The catalysed reaction is Release of an N-terminal amino acid, preferentially leucine, but not glutamic or aspartic acids.. Its function is as follows. Presumably involved in the processing and regular turnover of intracellular proteins. Catalyzes the removal of unsubstituted N-terminal amino acids from various peptides. This is Probable cytosol aminopeptidase from Desulfovibrio desulfuricans (strain ATCC 27774 / DSM 6949 / MB).